A 679-amino-acid chain; its full sequence is Sodium-dependent phosphate transporter 1 (679 aa).

The next 6 helical transmembrane spans lie at 21–41, 62–82, 100–120, 158–178, 203–223, and 230–250; these read YLWM…SVGA, ACIL…AKVS, GLLM…QLVA, IVMS…ILFF, ACTV…LLGF, and GTIL…WFFV. A phosphoserine mark is found at serine 265 and serine 269. The next 4 membrane-spanning stretches (helical) occupy residues 511–531, 558–578, 600–620, and 650–670; these read VSLL…FAHG, VATP…GLWV, FSIE…GLPI, and IFMA…AIMA. Residues 550–558 form an a region; it reads DTGDVSSKV.

Belongs to the inorganic phosphate transporter (PiT) (TC 2.A.20) family. Ubiquitously expressed.

The protein resides in the cell membrane. The catalysed reaction is 2 Na(+)(out) + phosphate(out) = 2 Na(+)(in) + phosphate(in). In terms of biological role, sodium-phosphate symporter which preferentially transports the monovalent form of phosphate with a stoichiometry of two sodium ions per phosphate ion. May play a role in extracellular matrix and cartilage calcification as well as in vascular calcification. Essential for cell proliferation but this function is independent of its phosphate transporter activity. Its function is as follows. (Microbial infection) May function as a retroviral receptor as it confers human cells susceptibility to infection to Gibbon Ape Leukemia Virus (GaLV), Simian sarcoma-associated virus (SSAV) and Feline leukemia virus subgroup B (FeLV-B) as well as 10A1 murine leukemia virus (10A1 MLV). The protein is Sodium-dependent phosphate transporter 1 (SLC20A1) of Homo sapiens (Human).